Reading from the N-terminus, the 434-residue chain is Eukaryotic translation initiation factor 3 subunit E (434 aa).

One can recognise a PCI domain in the interval 219 to 392 (FFNHPKGRDL…GHVVMGTQPL (174 aa)).

This sequence belongs to the eIF-3 subunit E family. As to quaternary structure, component of the eukaryotic translation initiation factor 3 (eIF-3) complex. The eIF-3 complex interacts with pix. Interacts with mxt.

The protein resides in the cytoplasm. Functionally, component of the eukaryotic translation initiation factor 3 (eIF-3) complex, which is involved in protein synthesis of a specialized repertoire of mRNAs and, together with other initiation factors, stimulates binding of mRNA and methionyl-tRNAi to the 40S ribosome. The eIF-3 complex specifically targets and initiates translation of a subset of mRNAs involved in cell proliferation. The sequence is that of Eukaryotic translation initiation factor 3 subunit E (eIF3-S6) from Drosophila persimilis (Fruit fly).